The following is a 94-amino-acid chain: Small ribosomal subunit protein uS19c (94 aa).

Belongs to the universal ribosomal protein uS19 family.

Its subcellular location is the plastid. The protein localises to the chloroplast. Protein S19 forms a complex with S13 that binds strongly to the 16S ribosomal RNA. In Cyanidioschyzon merolae (strain NIES-3377 / 10D) (Unicellular red alga), this protein is Small ribosomal subunit protein uS19c.